The chain runs to 73 residues: Large ribosomal subunit protein uL30 (73 aa).

The protein belongs to the universal ribosomal protein uL30 family. In terms of assembly, part of the 50S ribosomal subunit.

The chain is Large ribosomal subunit protein uL30 from Borrelia hermsii (strain HS1 / DAH).